Reading from the N-terminus, the 115-residue chain is Large ribosomal subunit protein bL20 (115 aa).

Belongs to the bacterial ribosomal protein bL20 family.

In terms of biological role, binds directly to 23S ribosomal RNA and is necessary for the in vitro assembly process of the 50S ribosomal subunit. It is not involved in the protein synthesizing functions of that subunit. This chain is Large ribosomal subunit protein bL20, found in Cytophaga hutchinsonii (strain ATCC 33406 / DSM 1761 / CIP 103989 / NBRC 15051 / NCIMB 9469 / D465).